We begin with the raw amino-acid sequence, 713 residues long: MIINSQEYLQPPQWWNERVEAGNLLSISNGEQEPTNYLMTNVGNGYVAFVIGGESIYVGGVYNGPAINLGDANNLPSHRAGIPNFQNIEISNAQFQYAGLDIENATYTRVYSIPSSPGTIVKQIFYAHQKIRNILVQEIEVDNSNIETDVTLQLSVVGINLTANVDFNILNLTNTQFTGNDYQLYNLTIKVPEVNFMTSVAVTTTTIPQSITIKSGEKKKHHYVTSFLTNIETNDYIEGSLDIYKTTFLLADQLIKSHLDEWNKIWISGIEVGGDSHLQQVVNSSLYYLFSSIRDDWSYGMSPGGLASDGYNGHSFWDTETWMLPPILLLNPKLVRDCLLQYRINNLPGAHEKALSYKSNNYTGFMFPWESAFTGIEVCPTFAPTGILEQHITADIALAIRQYYYLTGDLDWLIDFGYKALKGIAEFWASRVEYDQLNQQYSINTIIPPDEYAVGVNNSVYTNVAVKMTFEWVIEVATLINDTENIPFEHWSSIANGLVILFDEVNQWHPEYQGYNGETIKQADVVLLGFPLMYNMSKEARKNDLIYYEAVTTNSGPAMTYSMHTVAWLELESLENATKQWFRSYNNCNNSPFLVWTETPTGGAVNFATGMGGFLQGLMFGYGGVRIHQGNLDFYPQLPEGTTSLKIRSMNYIGSTFNVGWNQTTITFEMLTFNPSVYLTLLSTEYDNIILNTLDPIYLTFGSKFQIYFNNNN.

The signal sequence occupies residues 1–21; it reads MIINSQEYLQPPQWWNERVEA. N-linked (GlcNAc...) asparagine glycosylation is found at N104, N160, N171, N186, and N283. 317–318 is a substrate binding site; that stretch reads WD. N361 carries an N-linked (GlcNAc...) asparagine glycan. E451 acts as the Proton donor in catalysis. N-linked (GlcNAc...) asparagine glycosylation is found at N457 and N481. 521–522 serves as a coordination point for substrate; sequence KQ. N-linked (GlcNAc...) asparagine glycosylation is found at N535, N576, and N662.

Belongs to the glycosyl hydrolase 65 family.

Its subcellular location is the secreted. It catalyses the reaction (5R)-5-O-[alpha-D-glucosyl-(1-&gt;2)-beta-D-galactosyl]-5-hydroxy-L-lysyl-[collagen] + H2O = (5R)-5-O-(beta-D-galactosyl)-5-hydroxy-L-lysyl-[collagen] + D-glucose. Catalyzes the hydrolysis of glucose from the disaccharide unit linked to hydroxylysine residues of collagen and collagen-like proteins. The protein is Protein-glucosylgalactosylhydroxylysine glucosidase of Dictyostelium discoideum (Social amoeba).